The primary structure comprises 423 residues: Gamma-glutamyl phosphate reductase 2 (423 aa).

Belongs to the gamma-glutamyl phosphate reductase family.

The protein resides in the cytoplasm. It carries out the reaction L-glutamate 5-semialdehyde + phosphate + NADP(+) = L-glutamyl 5-phosphate + NADPH + H(+). Its pathway is amino-acid biosynthesis; L-proline biosynthesis; L-glutamate 5-semialdehyde from L-glutamate: step 2/2. In terms of biological role, catalyzes the NADPH-dependent reduction of L-glutamate 5-phosphate into L-glutamate 5-semialdehyde and phosphate. The product spontaneously undergoes cyclization to form 1-pyrroline-5-carboxylate. In Bacillus licheniformis (strain ATCC 14580 / DSM 13 / JCM 2505 / CCUG 7422 / NBRC 12200 / NCIMB 9375 / NCTC 10341 / NRRL NRS-1264 / Gibson 46), this protein is Gamma-glutamyl phosphate reductase 2.